A 250-amino-acid chain; its full sequence is Non-specific acid phosphatase (250 aa).

Residues 1–20 (MKSRYLLFFLPLIVAKYTSA) form the signal peptide.

This sequence belongs to the class A bacterial acid phosphatase family. In terms of assembly, homodimer.

The protein localises to the periplasm. It catalyses the reaction a phosphate monoester + H2O = an alcohol + phosphate. The protein is Non-specific acid phosphatase (phoN) of Salmonella typhi.